The primary structure comprises 184 residues: MKNVIDPFISLSYWPSAGGFGSNTNILETNIINSSVVLSVLIYFGKGVLSNLLDNRKQKILETIRNSEELCKGAIDQLEKARACLRNVEMIADEIQVNGNSQIEREKEDLLNTASDNLEQLEDPKNETIYSEQQRAFDQIRQQVSRQALRRAIGTLNSRLNTELHLRTIDHNIGLLRTMMNTND.

Residues 31–49 (IINSSVVLSVLIYFGKGVL) form a helical membrane-spanning segment.

Belongs to the ATPase B chain family. In terms of assembly, F-type ATPases have 2 components, F(1) - the catalytic core - and F(0) - the membrane proton channel. F(1) has five subunits: alpha(3), beta(3), gamma(1), delta(1), epsilon(1). F(0) has four main subunits: a(1), b(1), b'(1) and c(10-14). The alpha and beta chains form an alternating ring which encloses part of the gamma chain. F(1) is attached to F(0) by a central stalk formed by the gamma and epsilon chains, while a peripheral stalk is formed by the delta, b and b' chains.

Its subcellular location is the plastid. The protein resides in the chloroplast thylakoid membrane. Its function is as follows. F(1)F(0) ATP synthase produces ATP from ADP in the presence of a proton or sodium gradient. F-type ATPases consist of two structural domains, F(1) containing the extramembraneous catalytic core and F(0) containing the membrane proton channel, linked together by a central stalk and a peripheral stalk. During catalysis, ATP synthesis in the catalytic domain of F(1) is coupled via a rotary mechanism of the central stalk subunits to proton translocation. Functionally, component of the F(0) channel, it forms part of the peripheral stalk, linking F(1) to F(0). In Pinus thunbergii (Japanese black pine), this protein is ATP synthase subunit b, chloroplastic.